A 422-amino-acid polypeptide reads, in one-letter code: Inhibitory synaptic factor 2A (422 aa).

The tract at residues Phe-143–Ser-163 is disordered. Over residues Asp-146–Arg-160 the composition is skewed to basic and acidic residues. Ser-177 carries the phosphoserine modification. Positions Thr-344–Leu-370 form a coiled coil.

Belongs to the INSYN2 family. As to quaternary structure, interacts with GPHN.

It localises to the postsynaptic density. Component of the protein machinery at the inhibitory synapses, probably acting as a scaffold. Inhibitory synapses dampen neuronal activity through postsynaptic hyperpolarization. This synaptic inhibition is fundamental for the functioning of the central nervous system, shaping and orchestrating the flow of information through neuronal networks to generate a precise neural code. This chain is Inhibitory synaptic factor 2A, found in Mus musculus (Mouse).